The chain runs to 173 residues: Mesogenin-1 (173 aa).

Polar residues predominate over residues 39–68 (ESYSLSQTPSPQSVSPAASYESTYSSSPHT). 2 disordered regions span residues 39 to 69 (ESYS…PHTG) and 96 to 117 (TKKD…ASER). Over residues 99–114 (DHGHKTSMTTHRRRKA) the composition is skewed to basic residues. One can recognise a bHLH domain in the interval 109–163 (HRRRKASEREKLRMRAIAEALHTLRNNLPPMYSQGRQPLTKIQTLKCTINYISEL).

The protein resides in the nucleus. In terms of biological role, involved in specifying the paraxial, but not dorsal, mesoderm. May regulate the expression of T-box transcription factors required for mesoderm formation and differentiation, such as brachyury T, wnt8, vegt and eomes. This is Mesogenin-1 (msgn1) from Xenopus laevis (African clawed frog).